Reading from the N-terminus, the 174-residue chain is CASP-like protein 1 (174 aa).

The disordered stretch occupies residues 1-25 (MDSKSGRSESAINIPESNSTKHKST). Topologically, residues 1–46 (MDSKSGRSESAINIPESNSTKHKSTAVHTATKVAAVAPRGGGWRRG) are cytoplasmic. The span at 8–18 (SESAINIPESN) shows a compositional bias: polar residues. Residues 47-67 (VSIFDFILRICALAAALAATA) traverse the membrane as a helical segment. Over 68–96 (TMGTTDQTLPFFTQIIQFQASYDDLPVFT) the chain is Extracellular. A helical transmembrane segment spans residues 97-117 (FFVVANGIASGYLVLSLPFSI). Over 118-119 (AT) the chain is Cytoplasmic. The chain crosses the membrane as a helical span at residues 120–139 (IVRPHAAAIKLLLIIFDTQF). Residues 140 to 150 (NDFCQRVSGAV) lie on the Extracellular side of the membrane. The helical transmembrane segment at 151 to 171 (VASFVAAVILIFLVVLSAVAI) threads the bilayer. Residues 172 to 174 (RKH) lie on the Cytoplasmic side of the membrane.

The protein belongs to the Casparian strip membrane proteins (CASP) family. In terms of assembly, homodimer and heterodimers.

The protein localises to the cell membrane. This Triphysaria pusilla (Dwarf owl's-clover) protein is CASP-like protein 1.